Reading from the N-terminus, the 290-residue chain is Probable lipid hydrolase 463L (290 aa).

Helical transmembrane passes span 26–46 (TLVLSGGAMRGVYLLGALNGL) and 53–73 (ISTFIGISSGSIICFLLSIGY). In terms of domain architecture, PNPLA spans 27–207 (LVLSGGAMRG…WNNFPIDIAI (181 aa)). The GXSXG signature appears at 58–62 (GISSG). Ser-60 serves as the catalytic Nucleophile. The active-site Proton acceptor is the Asp-194. The short motif at 194 to 196 (DGG) is the DGA/G element.

Its subcellular location is the membrane. In terms of biological role, probable lipid hydrolase. The protein is Probable lipid hydrolase 463L of Invertebrate iridescent virus 6 (IIV-6).